Reading from the N-terminus, the 185-residue chain is Signal peptidase I (185 aa).

At 1 to 20 the chain is on the cytoplasmic side; that stretch reads MKSEKEKTSKKSAVLDWAKA. The helical transmembrane segment at 21–41 threads the bilayer; it reads IIIAVVLAVLIRNFLFAPYVV. Topologically, residues 42–185 are extracellular; that stretch reads DGESMEPTLH…FPFNEIRKTK (144 aa). Catalysis depends on residues Ser-45 and Lys-85.

This sequence belongs to the peptidase S26 family.

It localises to the cell membrane. The enzyme catalyses Cleavage of hydrophobic, N-terminal signal or leader sequences from secreted and periplasmic proteins.. In Bacillus amyloliquefaciens (Bacillus velezensis), this protein is Signal peptidase I (sipA).